A 162-amino-acid chain; its full sequence is Sec-independent protein translocase protein TatB (162 aa).

A helical transmembrane segment spans residues 1 to 21 (MFDIGFLEIIVIMVIALIVIG). The interval 86 to 162 (IQDEFGIDQE…ESTPESSNKS (77 aa)) is disordered. The span at 108 to 117 (FSGTQFNKAP) shows a compositional bias: polar residues. Residues 123–135 (PTTEESPSSTPET) show a composition bias toward low complexity. The segment covering 147–162 (DVSAPSESTPESSNKS) has biased composition (polar residues).

Belongs to the TatB family. In terms of assembly, the Tat system comprises two distinct complexes: a TatABC complex, containing multiple copies of TatA, TatB and TatC subunits, and a separate TatA complex, containing only TatA subunits. Substrates initially bind to the TatABC complex, which probably triggers association of the separate TatA complex to form the active translocon.

The protein resides in the cell inner membrane. Its function is as follows. Part of the twin-arginine translocation (Tat) system that transports large folded proteins containing a characteristic twin-arginine motif in their signal peptide across membranes. Together with TatC, TatB is part of a receptor directly interacting with Tat signal peptides. TatB may form an oligomeric binding site that transiently accommodates folded Tat precursor proteins before their translocation. In Hydrogenovibrio crunogenus (strain DSM 25203 / XCL-2) (Thiomicrospira crunogena), this protein is Sec-independent protein translocase protein TatB.